Reading from the N-terminus, the 272-residue chain is Ethanolamine ammonia-lyase small subunit (272 aa).

Positions 161, 182, and 211 each coordinate adenosylcob(III)alamin.

The protein belongs to the EutC family. In terms of assembly, the basic unit is a heterodimer which dimerizes to form tetramers. The heterotetramers trimerize; 6 large subunits form a core ring with 6 small subunits projecting outwards. Adenosylcob(III)alamin serves as cofactor.

It localises to the bacterial microcompartment. The enzyme catalyses ethanolamine = acetaldehyde + NH4(+). It participates in amine and polyamine degradation; ethanolamine degradation. Its function is as follows. Catalyzes the deamination of various vicinal amino-alcohols to oxo compounds. Allows this organism to utilize ethanolamine as the sole source of nitrogen and carbon in the presence of external vitamin B12. The sequence is that of Ethanolamine ammonia-lyase small subunit from Xanthomonas campestris pv. campestris (strain ATCC 33913 / DSM 3586 / NCPPB 528 / LMG 568 / P 25).